A 559-amino-acid chain; its full sequence is Nuclear envelope integral membrane protein (559 aa).

The first 15 residues, 1 to 15, serve as a signal peptide directing secretion; sequence MRLLTLALLVAGSLA. Asn-67, Asn-81, and Asn-114 each carry an N-linked (GlcNAc...) asparagine glycan. 5 helical membrane-spanning segments follow: residues 164–184, 192–212, 218–238, 267–287, and 290–310; these read YTSG…FIVW, IGVP…HFAW, IMIE…LISM, LIYF…ALII, and ICRG…KAVW. N-linked (GlcNAc...) asparagine glycosylation is found at Asn-408 and Asn-465. Disordered stretches follow at residues 475–494 and 510–559; these read RRDS…PRMP and KNGR…DADE. Over residues 517–526 the composition is skewed to polar residues; the sequence is PSSSTASGMT. A compositionally biased stretch (basic and acidic residues) spans 530–539; the sequence is YMRKARRIDA.

The protein belongs to the NEMP family.

It is found in the nucleus inner membrane. Functionally, contributes to nuclear envelope stiffness in germ cells. Required for fertility. The sequence is that of Nuclear envelope integral membrane protein from Caenorhabditis elegans.